Consider the following 600-residue polypeptide: Glutamine--fructose-6-phosphate aminotransferase [isomerizing] (600 aa).

Cys-2 acts as the Nucleophile; for GATase activity in catalysis. Positions 2–217 constitute a Glutamine amidotransferase type-2 domain; that stretch reads CGIVGYIGQL…DKEMVIVTDD (216 aa). SIS domains are found at residues 283–422 and 452–590; these read IAAA…KNGI and IARE…VDKP. Lys-595 functions as the For Fru-6P isomerization activity in the catalytic mechanism.

Homodimer.

The protein resides in the cytoplasm. It carries out the reaction D-fructose 6-phosphate + L-glutamine = D-glucosamine 6-phosphate + L-glutamate. Catalyzes the first step in hexosamine metabolism, converting fructose-6P into glucosamine-6P using glutamine as a nitrogen source. This Bacillus subtilis (strain 168) protein is Glutamine--fructose-6-phosphate aminotransferase [isomerizing].